The primary structure comprises 454 residues: tRNA modification GTPase MnmE (454 aa).

(6S)-5-formyl-5,6,7,8-tetrahydrofolate contacts are provided by Arg23, Glu80, and Lys120. Residues Thr216–Thr377 enclose the TrmE-type G domain. Position 226 (Asn226) interacts with K(+). Residues Asn226–Ser231, Thr245–Thr251, and Asp270–Gly273 each bind GTP. Ser230 provides a ligand contact to Mg(2+). K(+) contacts are provided by Thr245, Ile247, and Thr250. Position 251 (Thr251) interacts with Mg(2+). Lys454 contributes to the (6S)-5-formyl-5,6,7,8-tetrahydrofolate binding site.

Belongs to the TRAFAC class TrmE-Era-EngA-EngB-Septin-like GTPase superfamily. TrmE GTPase family. In terms of assembly, homodimer. Heterotetramer of two MnmE and two MnmG subunits. K(+) is required as a cofactor.

It localises to the cytoplasm. Exhibits a very high intrinsic GTPase hydrolysis rate. Involved in the addition of a carboxymethylaminomethyl (cmnm) group at the wobble position (U34) of certain tRNAs, forming tRNA-cmnm(5)s(2)U34. This is tRNA modification GTPase MnmE from Buchnera aphidicola subsp. Cinara cedri (strain Cc).